Reading from the N-terminus, the 250-residue chain is Galectin-3 (250 aa).

Positions 1–60 (MADNFSLHDALSGSGNPNPQGWPGAWGNQPAGAGGYPGASYPGAYPGQAPPGAYPGQAPP) are disordered. The residue at position 2 (alanine 2) is an N-acetylalanine. A phosphoserine mark is found at serine 6 and serine 12. 3 consecutive repeat copies span residues 36 to 44 (YPGASYPGA), 45 to 53 (YPGQAPPGA), and 54 to 62 (YPGQAPPGA). The tract at residues 36 to 109 (YPGASYPGAY…AYPATGPYGA (74 aa)) is 8 X 9 AA tandem repeats of Y-P-G-X(3)-P-G-A. Low complexity predominate over residues 38–47 (GASYPGAYPG). The span at 48 to 60 (QAPPGAYPGQAPP) shows a compositional bias: pro residues. One copy of the 4; approximate repeat lies at 63–69 (YPGAPGA). The stretch at 70–78 (YPGAPAPGV) is repeat 5. The 6; approximate repeat unit spans residues 79 to 88 (YPGPPSGPGA). The 7; approximate repeat unit spans residues 89 to 100 (YPSSGQPSATGA). The stretch at 101–109 (YPATGPYGA) is one 8; approximate repeat. Residues 118–248 (YNLPLPGGVV…DIDLTSASYT (131 aa)) form the Galectin domain. 181–187 (WGREERQ) provides a ligand contact to a beta-D-galactoside. Phosphoserine is present on serine 188. The short motif at 226–241 (KKLNEISKLGISGDID) is the Nuclear export signal element.

In terms of assembly, probably forms homo- or heterodimers. Interacts with DMBT1. Interacts with CD6 and ALCAM. Forms a complex with the ITGA3, ITGB1 and CSPG4. Interacts with LGALS3BP, LYPD3, ZFTRAF1 and UACA. Interacts with TRIM16; this interaction mediates autophagy of damage endomembranes. Interacts with cargo receptor TMED10; the interaction mediates the translocation from the cytoplasm into the ERGIC (endoplasmic reticulum-Golgi intermediate compartment) and thereby secretion. In terms of tissue distribution, a major expression is found in the colonic epithelium. It is also abundant in the activated macrophages. Expressed in fetal membranes.

Its subcellular location is the cytoplasm. It localises to the nucleus. The protein localises to the secreted. Galactose-specific lectin which binds IgE. May mediate with the alpha-3, beta-1 integrin the stimulation by CSPG4 of endothelial cells migration. Together with DMBT1, required for terminal differentiation of columnar epithelial cells during early embryogenesis. In the nucleus: acts as a pre-mRNA splicing factor. Involved in acute inflammatory responses including neutrophil activation and adhesion, chemoattraction of monocytes macrophages, opsonization of apoptotic neutrophils, and activation of mast cells. Together with TRIM16, coordinates the recognition of membrane damage with mobilization of the core autophagy regulators ATG16L1 and BECN1 in response to damaged endomembranes. The protein is Galectin-3 of Homo sapiens (Human).